A 38-amino-acid chain; its full sequence is uncharacterized protein (38 aa).

Residues 10–32 form a helical membrane-spanning segment; it reads FSLLWYFLVGGGKGEVCWRFLGI.

The protein localises to the membrane. This is an uncharacterized protein from Saccharomyces cerevisiae (strain ATCC 204508 / S288c) (Baker's yeast).